A 241-amino-acid polypeptide reads, in one-letter code: 2,3-bisphosphoglycerate-dependent phosphoglycerate mutase (241 aa).

Catalysis depends on His-12, which acts as the Tele-phosphohistidine intermediate. Substrate-binding positions include Ser-24–Gly-25, Arg-61, Glu-117–Tyr-120, and Lys-128. The active-site Proton donor/acceptor is the Glu-117.

Belongs to the phosphoglycerate mutase family. BPG-dependent PGAM subfamily.

It catalyses the reaction (2R)-2-phosphoglycerate = (2R)-3-phosphoglycerate. It participates in carbohydrate degradation; glycolysis; pyruvate from D-glyceraldehyde 3-phosphate: step 3/5. Its function is as follows. Catalyzes the interconversion of 2-phosphoglycerate and 3-phosphoglycerate. The chain is 2,3-bisphosphoglycerate-dependent phosphoglycerate mutase from Methanosarcina mazei (strain ATCC BAA-159 / DSM 3647 / Goe1 / Go1 / JCM 11833 / OCM 88) (Methanosarcina frisia).